The following is a 206-amino-acid chain: RNA pyrophosphohydrolase (206 aa).

One can recognise a Nudix hydrolase domain in the interval 6-150 (GYRPNVGIVI…KRDVYRKVMK (145 aa)). The short motif at 38 to 59 (GGINEGENIETAMYRELYEEVG) is the Nudix box element. The span at 162–191 (KPETVEKPRVERTEKRDFQKRDNQKREFRK) shows a compositional bias: basic and acidic residues. The segment at 162–206 (KPETVEKPRVERTEKRDFQKRDNQKREFRKSARMWNNSHQKGKAQ) is disordered.

It belongs to the Nudix hydrolase family. RppH subfamily. A divalent metal cation serves as cofactor.

Its function is as follows. Accelerates the degradation of transcripts by removing pyrophosphate from the 5'-end of triphosphorylated RNA, leading to a more labile monophosphorylated state that can stimulate subsequent ribonuclease cleavage. The chain is RNA pyrophosphohydrolase from Actinobacillus pleuropneumoniae serotype 7 (strain AP76).